The chain runs to 278 residues: Sulfur carrier protein FdhD (278 aa).

The active-site Cysteine persulfide intermediate is the Cys113. 251-256 provides a ligand contact to Mo-bis(molybdopterin guanine dinucleotide); that stretch reads FCRNGR.

It belongs to the FdhD family.

The protein resides in the cytoplasm. Required for formate dehydrogenase (FDH) activity. Acts as a sulfur carrier protein that transfers sulfur from IscS to the molybdenum cofactor prior to its insertion into FDH. This is Sulfur carrier protein FdhD from Shewanella oneidensis (strain ATCC 700550 / JCM 31522 / CIP 106686 / LMG 19005 / NCIMB 14063 / MR-1).